Here is a 132-residue protein sequence, read N- to C-terminus: Small ribosomal subunit protein uS8 (132 aa).

The protein belongs to the universal ribosomal protein uS8 family. Part of the 30S ribosomal subunit. Contacts proteins S5 and S12.

In terms of biological role, one of the primary rRNA binding proteins, it binds directly to 16S rRNA central domain where it helps coordinate assembly of the platform of the 30S subunit. The polypeptide is Small ribosomal subunit protein uS8 (Streptococcus thermophilus (strain CNRZ 1066)).